The primary structure comprises 132 residues: uncharacterized protein (132 aa).

3 helical membrane-spanning segments follow: residues Phe-19–Leu-39, Ile-58–Met-78, and Leu-93–Leu-113.

It belongs to the bacteriophage holin family. Cp-1 holin subfamily.

The protein localises to the cell membrane. This is an uncharacterized protein from Clostridium perfringens.